A 298-amino-acid polypeptide reads, in one-letter code: ATP synthase gamma chain (298 aa).

The protein belongs to the ATPase gamma chain family. In terms of assembly, F-type ATPases have 2 components, CF(1) - the catalytic core - and CF(0) - the membrane proton channel. CF(1) has five subunits: alpha(3), beta(3), gamma(1), delta(1), epsilon(1). CF(0) has three main subunits: a, b and c.

The protein resides in the cell inner membrane. Functionally, produces ATP from ADP in the presence of a proton gradient across the membrane. The gamma chain is believed to be important in regulating ATPase activity and the flow of protons through the CF(0) complex. The protein is ATP synthase gamma chain of Zymomonas mobilis subsp. mobilis (strain ATCC 31821 / ZM4 / CP4).